Reading from the N-terminus, the 902-residue chain is Potassium/sodium hyperpolarization-activated cyclic nucleotide-gated channel 1 (902 aa).

Residues 1-75 (MEGGGKPNSA…PAGSFEDAEG (75 aa)) are disordered. At 1–131 (MEGGGKPNSA…WIIHPYSDFR (131 aa)) the chain is on the cytoplasmic side. Residues 132-153 (FYWDLIMLIMMVGNLVIIPVGI) traverse the membrane as a helical segment. Residues 154–162 (TFFTEQTTT) lie on the Extracellular side of the membrane. Residues 163–183 (PWIIFNVASDTVFLLDLIMNF) traverse the membrane as a helical segment. Topologically, residues 184–204 (RTGTVNEDSSEIILDPKVIKM) are cytoplasmic. A helical transmembrane segment spans residues 205-225 (NYLKSWFVVDFISSIPVDYIF). Residues 226–249 (LIVEKGMDSEVYKTARALRIVRFT) lie on the Extracellular side of the membrane. The chain crosses the membrane as a helical; Voltage-sensor span at residues 250-270 (KILSLLRLLRLSRLIRYIHQW). The Cytoplasmic segment spans residues 271 to 284 (EEIFHMTYDLASAV). The chain crosses the membrane as a helical span at residues 285-307 (VRIFNLIGMMLLLCHWDGCLQFL). Residues 308 to 333 (VPLLQDFPPDCWVSLNEMVNDSWGKQ) lie on the Extracellular side of the membrane. Asparagine 327 carries an N-linked (GlcNAc...) asparagine glycan. An intramembrane region (pore-forming) is located at residues 334 to 355 (YSYALFKAMSHMLCIGYGAQAP). The Selectivity filter motif lies at 347-351 (CIGYG). Residues 356–360 (VSMSD) are Extracellular-facing. The chain crosses the membrane as a helical span at residues 361 to 381 (LWITMLSMIVGATCYAMFVGH). The Cytoplasmic portion of the chain corresponds to 382-902 (ATALIQSLDS…AEKPRFASNL (521 aa)). The 3',5'-cyclic AMP site is built by glycine 528, glutamate 529, cysteine 531, arginine 538, threonine 539, arginine 579, and arginine 582. Disordered regions lie at residues 634–681 (TALN…QPSA), 713–824 (ASQL…VGES), and 858–902 (MSSG…ASNL). Low complexity-rich tracts occupy residues 639–680 (TSST…PQPS), 720–736 (QQPQPQLQQSQVQQTQP), and 744–769 (QPQQQQQQQQQQQQQQQQQQQQQQPQ). Residues 770–793 (TPGSSTPKNEVHKSTQALHNTNLT) show a composition bias toward polar residues. The segment covering 867 to 877 (RGVPPAPPPPA) has biased composition (pro residues). Basic and acidic residues predominate over residues 889 to 902 (KDPDAEKPRFASNL).

It belongs to the potassium channel HCN family. As to quaternary structure, homotetramer. Heterotetramer with HCN2. The potassium channel is composed of a homo- or heterotetrameric complex of pore-forming subunits. Interacts with KCNE2. Interacts with the SH3 domain of CSK. As to expression, highly expressed in cerebral cortex, cerebellum, throughout the hippocampus, in medial habenula, anterior dorsal nucleus in the thalamus, tenia tecta, several nuclei of the general motor system and in optic nerve layer. Detected in a subset of elongated cells in taste buds.

The protein localises to the cell membrane. It carries out the reaction Na(+)(in) = Na(+)(out). The enzyme catalyses K(+)(in) = K(+)(out). Activated by cAMP, and at 10-100 times higher concentrations, also by cGMP. cAMP binding promotes tetramerization and formation of an active channel. Compared to other family members, cAMP has less stimulatory effect on HCN1 because part of the molecules already contain bound cAMP and form homotetramers when cAMP levels are low, this inherent tetramerization in HCN1 results in a weaker response to increased cAMP. In terms of biological role, hyperpolarization-activated ion channel that are permeable to sodium and potassium ions. Exhibits weak selectivity for potassium over sodium ions. Contributes to the native pacemaker currents in heart (If) and in neurons (Ih). Participates in cerebellar mechanisms of motor learning. May mediate responses to sour stimuli. In Rattus norvegicus (Rat), this protein is Potassium/sodium hyperpolarization-activated cyclic nucleotide-gated channel 1 (Hcn1).